A 192-amino-acid polypeptide reads, in one-letter code: Large ribosomal subunit protein bL25 (192 aa).

This sequence belongs to the bacterial ribosomal protein bL25 family. CTC subfamily. In terms of assembly, part of the 50S ribosomal subunit; part of the 5S rRNA/L5/L18/L25 subcomplex. Contacts the 5S rRNA. Binds to the 5S rRNA independently of L5 and L18.

Its function is as follows. This is one of the proteins that binds to the 5S RNA in the ribosome where it forms part of the central protuberance. This chain is Large ribosomal subunit protein bL25, found in Marinomonas sp. (strain MWYL1).